A 404-amino-acid chain; its full sequence is MGEHPSPGPAVAACAEAERIEELEPEAEERLPAAPEDHWKVLFEKFDPGSTGYISTGKFRSLLESHSSKLDPHKKEVLLALADSHADGQICYQDFVNLMSNKRSNSFRQAILQGNRRLSSKALLEEKGLSLSQRLIRHVAYETLPREIDRKWYYDSYTCCPPPWFMITITLLEVALFLYNGVLLDQFVLQVTHPRYLKNSLVYHPQLRAQAWRYVTYIFMHAGVEQLGLNVALQLLVGVPLEMVHGATRIGLVYVAGVVAGSLAVSVADMTAPVVGSSGGVYALVSAHLANIVMNWSGMKCQFKLLRMAVALICMSMEFGRAVWLRFHPSAYPPCPHPSFVAHLGGVAVGITLGVVVLRNYEQRLQDQSLWWIFVTMYTIFVLFAVFWNIFAYTLLDLKLPPAP.

2 consecutive EF-hand domains span residues 34–69 (APEDHWKVLFEKFDPGSTGYISTGKFRSLLESHSSK) and 70–105 (LDPHKKEVLLALADSHADGQICYQDFVNLMSNKRSN). The next 7 helical transmembrane spans lie at 164 to 184 (WFMITITLLEVALFLYNGVLL), 227 to 247 (LGLNVALQLLVGVPLEMVHGA), 250 to 270 (IGLVYVAGVVAGSLAVSVADM), 274 to 294 (VVGSSGGVYALVSAHLANIVM), 305 to 324 (LLRMAVALICMSMEFGRAVW), 338 to 358 (PSFVAHLGGVAVGITLGVVVL), and 371 to 391 (WWIFVTMYTIFVLFAVFWNIF). Ser-278 functions as the Nucleophile in the catalytic mechanism. Residue His-343 is part of the active site.

It belongs to the peptidase S54 family.

It is found in the membrane. The catalysed reaction is Cleaves type-1 transmembrane domains using a catalytic dyad composed of serine and histidine that are contributed by different transmembrane domains.. Functionally, may be involved in regulated intramembrane proteolysis and the subsequent release of functional polypeptides from their membrane anchors. In Mus musculus (Mouse), this protein is Rhomboid-related protein 3 (Rhbdl3).